Consider the following 189-residue polypeptide: dCTP deaminase, dUMP-forming (189 aa).

DCTP-binding positions include 101–106, D119, 127–129, Q148, Y162, and Q174; these read KSSLGR and TLE. E129 functions as the Proton donor/acceptor in the catalytic mechanism. Positions 166-189 are disordered; the sequence is AVGSKYQGQRGPTPSRSHLNFIKS. Over residues 171–189 the composition is skewed to polar residues; sequence YQGQRGPTPSRSHLNFIKS.

This sequence belongs to the dCTP deaminase family. In terms of assembly, homotrimer.

The catalysed reaction is dCTP + 2 H2O = dUMP + NH4(+) + diphosphate. It functions in the pathway pyrimidine metabolism; dUMP biosynthesis; dUMP from dCTP: step 1/1. Its function is as follows. Bifunctional enzyme that catalyzes both the deamination of dCTP to dUTP and the hydrolysis of dUTP to dUMP without releasing the toxic dUTP intermediate. This Mycolicibacterium smegmatis (strain ATCC 700084 / mc(2)155) (Mycobacterium smegmatis) protein is dCTP deaminase, dUMP-forming.